The following is a 620-amino-acid chain: Glutathione-regulated potassium-efflux system protein KefC (620 aa).

The next 12 membrane-spanning stretches (helical) occupy residues 4–24, 26–46, 54–74, 90–110, 114–134, 149–169, 178–198, 218–238, 270–290, 294–314, 327–347, and 359–379; these read HTLI…PIAV, LGLG…PWGL, SILH…GLEL, GALQ…LLGL, VAEL…MQAM, FAVL…IPLL, MGAF…VVLL, VFSA…EEVG, GLLL…GTLL, LRIV…LWLI, WFAV…GAAQ, and SLTL…VILN. Residues 399 to 518 enclose the RCK N-terminal domain; that stretch reads QPRVIIAGFG…AGVEKPERET (120 aa). A disordered region spans residues 597-620; that stretch reads GWQGTEEGKHTGNMADEPETKPSS.

The protein belongs to the monovalent cation:proton antiporter 2 (CPA2) transporter (TC 2.A.37) family. KefC subfamily. Homodimer. Interacts with the regulatory subunit KefF.

It is found in the cell inner membrane. In terms of biological role, pore-forming subunit of a potassium efflux system that confers protection against electrophiles. Catalyzes K(+)/H(+) antiport. The polypeptide is Glutathione-regulated potassium-efflux system protein KefC (Escherichia coli (strain K12 / MC4100 / BW2952)).